Reading from the N-terminus, the 98-residue chain is Sm-like protein LSM8 (98 aa).

Residues alanine 2–glutamate 78 form the Sm domain.

This sequence belongs to the snRNP Sm proteins family. As to quaternary structure, component of the heptameric LSM2-LSM8 complex that forms a seven-membered ring structure with a donut shape. The LSM subunits are arranged in the order LSM8, LSM2, LSM3, LSM6, LSM5, LSM7 and LSM4. LSM8 subunit interacts only with its two neighboring subunits, LSM2 and LSM4. Interacts with the prefoldin co-chaperone subunits PFD1, PFD2, PFD3, PFD4, PFD5 and PFD6. As to expression, expressed in roots, leaves, stems, flowers and siliques.

The protein localises to the nucleus. Functionally, component of the nuclear LSM2-LSM8 complex which is involved splicing nuclear mRNAs. LSM2-LSM8 binds directly to the U6 small nuclear RNAs (snRNAs). LSM8 is essential for the formation of the nuclear LSM2-LSM8 complex involved in the accurate splicing of selected development-related mRNAs through the stabilization of the spliceosomal U6 snRNA. Plays a critical role in the regulation of development-related gene expression. This Arabidopsis thaliana (Mouse-ear cress) protein is Sm-like protein LSM8.